The following is a 1002-amino-acid chain: Golgin subfamily A member 2 (1002 aa).

Pro residues predominate over residues 1 to 11; sequence MWPQPRLPPRP. Residues 1 to 84 form an interaction with p115/USO1 region; that stretch reads MWPQPRLPPR…AATLQPSDDT (84 aa). Positions 1 to 107 are disordered; it reads MWPQPRLPPR…TSMAASQNHD (107 aa). Positions 16 to 892 form a coiled coil; the sequence is ETRQSKLAAA…LELQELVLRL (877 aa). Residues arginine 18, arginine 30, and arginine 35 each carry the dimethylated arginine modification. The short motif at 26 to 49 is the Nuclear localization signal element; that stretch reads KKKLREYQQRNSPGVPTGAKKKKK. Residue serine 37 is modified to Phosphoserine. Residues 52–63 are compositionally biased toward polar residues; the sequence is NGSNPETTTSGG. Phosphoserine is present on serine 66. Residues 95 to 105 are compositionally biased toward polar residues; sequence ASLTSMAASQN. Residues serine 273, serine 438, and serine 690 each carry the phosphoserine modification. Positions 694–724 are disordered; it reads HPGEGDGLDREEEEDEEEEEEEAVAVPQPMP. The span at 702-716 shows a compositional bias: acidic residues; that stretch reads DREEEEDEEEEEEEA. Phosphoserine occurs at positions 937, 953, and 981. Residues 992 to 1002 form an interaction with GORASP1/GRASP65 region; sequence DENDEVKITVI.

This sequence belongs to the GOLGA2 family. Homodimer, may assemble into homohexamers. Homotetramer; forms a parallel homotetramer with a flexible rod-like structure that can give rise to I- and Y-shaped conformations. Interacts with GORASP1/GRASP65. The homooligomer forms a complex with GORASP1 with a 1:1 stoichiometry. Interacts with RAB1B that has been activated by GTP-binding. Interacts with p115/USO1; interaction with p115/USO1 inhibits interaction with STX5 and/or RAB1B. Interacts with STX5. Interacts with ZFPL1. Interacts with AKAP450/AKAP9; leading to recruit AKAP450/AKAP9 to the cis-Golgi. Post-translationally, cleaved by caspases at the onset of apoptosis. In terms of processing, methylation by PRMT5 is required for Golgi ribbon formation. While dimethylation at Arg-30 and Arg-35 are confirmed in vivo, it is unclear whether Arg-18 is methylated in vivo. Phosphorylated at Ser-37 by CDK1 at the onset of mitosis, inhibiting the interaction with p115/USO1 and triggering Golgi disassembly. Phosphorylated at Ser-37 in prophase as the Golgi complex starts to break down, and remains phosphorylated during further breakdown and partitioning of the Golgi fragments in metaphase and anaphase. In telophase, GM130 is dephosphorylated by PP2A as the Golgi fragments start to reassemble.

It localises to the golgi apparatus. Its subcellular location is the cis-Golgi network membrane. The protein localises to the endoplasmic reticulum-Golgi intermediate compartment membrane. The protein resides in the cytoplasm. It is found in the cytoskeleton. It localises to the spindle pole. In terms of biological role, peripheral membrane component of the cis-Golgi stack that acts as a membrane skeleton that maintains the structure of the Golgi apparatus, and as a vesicle thether that facilitates vesicle fusion to the Golgi membrane. Required for normal protein transport from the endoplasmic reticulum to the Golgi apparatus and the cell membrane. Together with p115/USO1 and STX5, involved in vesicle tethering and fusion at the cis-Golgi membrane to maintain the stacked and inter-connected structure of the Golgi apparatus. Plays a central role in mitotic Golgi disassembly: phosphorylation at Ser-37 by CDK1 at the onset of mitosis inhibits the interaction with p115/USO1, preventing tethering of COPI vesicles and thereby inhibiting transport through the Golgi apparatus during mitosis. Also plays a key role in spindle pole assembly and centrosome organization. Promotes the mitotic spindle pole assembly by activating the spindle assembly factor TPX2 to nucleate microtubules around the Golgi and capture them to couple mitotic membranes to the spindle: upon phosphorylation at the onset of mitosis, GOLGA2 interacts with importin-alpha via the nuclear localization signal region, leading to recruit importin-alpha to the Golgi membranes and liberate the spindle assembly factor TPX2 from importin-alpha. TPX2 then activates AURKA kinase and stimulates local microtubule nucleation. Upon filament assembly, nascent microtubules are further captured by GOLGA2, thus linking Golgi membranes to the spindle. Regulates the meiotic spindle pole assembly, probably via the same mechanism. Also regulates the centrosome organization. Also required for the Golgi ribbon formation and glycosylation of membrane and secretory proteins. The sequence is that of Golgin subfamily A member 2 (GOLGA2) from Homo sapiens (Human).